A 403-amino-acid polypeptide reads, in one-letter code: uncharacterized protein (403 aa).

H81 lines the Zn(2+) pocket. D83 is a catalytic residue. Zn(2+) is bound at residue D114. E148 (proton acceptor) is an active-site residue. The Zn(2+) site is built by E149, E174, and H374.

Belongs to the peptidase M20A family. It depends on Zn(2+) as a cofactor. Requires Co(2+) as cofactor.

This is an uncharacterized protein from Escherichia coli O157:H7.